The sequence spans 328 residues: Phosphate acyltransferase (328 aa).

It belongs to the PlsX family. Homodimer. Probably interacts with PlsY.

It localises to the cytoplasm. It carries out the reaction a fatty acyl-[ACP] + phosphate = an acyl phosphate + holo-[ACP]. Its pathway is lipid metabolism; phospholipid metabolism. In terms of biological role, catalyzes the reversible formation of acyl-phosphate (acyl-PO(4)) from acyl-[acyl-carrier-protein] (acyl-ACP). This enzyme utilizes acyl-ACP as fatty acyl donor, but not acyl-CoA. The polypeptide is Phosphate acyltransferase (Staphylococcus aureus (strain MSSA476)).